We begin with the raw amino-acid sequence, 318 residues long: MAAHCRGTELDLSWISKVQVNHAAVLRRAQQIQARRSVKKEWQAAWLLKAVTFIDLTTLSGDDTFSNVQRLCYKAKYPIRADLLKALNMDDKGITTAAVCVYPARVCDAVKALKAAGCSIPVASVATGFPAGQTHLKTRLEEIRLAVEDGATEIDVVINRTLVLTGQWEALYDEVTQFRKACGEAHLKTILATGELGSLTNVYKASLVAMMAGSDFIKTSTGKETVNATFPVAIVMLRAIRDFFWKTGNKVGFKPAGGIRTAKESLAWLSLVKEELGDEWLTPDLFRIGASSLLSDIERQIYHHVTGRYAAYHDLPMS.

Asp-155 functions as the Proton donor/acceptor in the catalytic mechanism. Lys-218 serves as the catalytic Schiff-base intermediate with acetaldehyde. The Proton donor/acceptor role is filled by Lys-254.

It belongs to the DeoC/FbaB aldolase family. DeoC type 2 subfamily. Interacts with YBX1.

The protein localises to the cytoplasm. The protein resides in the cytoplasmic granule. It is found in the nucleus. The enzyme catalyses 2-deoxy-D-ribose 5-phosphate = D-glyceraldehyde 3-phosphate + acetaldehyde. It participates in carbohydrate degradation; 2-deoxy-D-ribose 1-phosphate degradation; D-glyceraldehyde 3-phosphate and acetaldehyde from 2-deoxy-alpha-D-ribose 1-phosphate: step 2/2. Its function is as follows. Catalyzes a reversible aldol reaction between acetaldehyde and D-glyceraldehyde 3-phosphate to generate 2-deoxy-D-ribose 5-phosphate. Participates in stress granule (SG) assembly. May allow ATP production from extracellular deoxyinosine in conditions of energy deprivation. This chain is Deoxyribose-phosphate aldolase (Dera), found in Mus musculus (Mouse).